The primary structure comprises 98 residues: NADH-ubiquinone oxidoreductase chain 4L (98 aa).

The next 3 helical transmembrane spans lie at 1–21, 29–49, and 61–81; these read MSLT…GLLL, SLLC…MIIL, and IILL…LVMV.

The protein belongs to the complex I subunit 4L family. In terms of assembly, core subunit of respiratory chain NADH dehydrogenase (Complex I) which is composed of 45 different subunits.

The protein resides in the mitochondrion inner membrane. It catalyses the reaction a ubiquinone + NADH + 5 H(+)(in) = a ubiquinol + NAD(+) + 4 H(+)(out). Its function is as follows. Core subunit of the mitochondrial membrane respiratory chain NADH dehydrogenase (Complex I) which catalyzes electron transfer from NADH through the respiratory chain, using ubiquinone as an electron acceptor. Part of the enzyme membrane arm which is embedded in the lipid bilayer and involved in proton translocation. This chain is NADH-ubiquinone oxidoreductase chain 4L (MT-ND4L), found in Platyrrhinus brachycephalus (Short-headed broad-nosed bat).